The chain runs to 411 residues: MMP alpha-(1-&gt;4)-mannosyltransferase (411 aa).

This sequence belongs to the glycosyltransferase group 1 family. Glycosyltransferase 4 subfamily.

It catalyses the reaction [3-O-methyl-alpha-D-mannosyl-(1-&gt;4)](n)-3-O-methyl-D-mannose + GDP-alpha-D-mannose = alpha-D-mannosyl-(1-&gt;4)-[3-O-methyl-alpha-D-mannosyl-(1-&gt;4)](n)-3-O-methyl-D-mannose + GDP + H(+). The enzyme catalyses [3-O-methyl-alpha-D-mannosyl-(1-&gt;4)](n)-1-O,3-O-dimethyl-alpha-D-mannose + GDP-alpha-D-mannose = alpha-D-mannosyl-(1-&gt;4)-[3-O-methyl-alpha-D-mannosyl-(1-&gt;4)](n)-1-O,3-O-dimethyl-alpha-D-mannose + GDP + H(+). Activity is significantly enhanced in the presence of Mg(2+). Its function is as follows. Glycosyltransferase involved in the biosynthesis of 3-O-methylmannose polysaccharides (MMP), which are intracellular polymethylated polysaccharides implicated in the modulation of fatty acid metabolism in non-tuberculous mycobacteria. Highly specific alpha-(1-&gt;4)-mannosyltransferase that can transfer mannose units from GDP-mannose to a wide range of alpha-(1-&gt;4) oligomannosides longer than three mannoses, including all hydrolytic products of MmpH. Can use synthetic trimannosides and tetramannosides as substrates, but not mono- and disaccharides, and is significantly more active with the methylated substrates, preferring the tetramannosides over the trimannosides. In Mycolicibacterium hassiacum (strain DSM 44199 / CIP 105218 / JCM 12690 / 3849) (Mycobacterium hassiacum), this protein is MMP alpha-(1-&gt;4)-mannosyltransferase.